A 166-amino-acid chain; its full sequence is Lipoprotein signal peptidase (166 aa).

Helical transmembrane passes span 9–29 (AGGS…FDQL), 37–57 (VFAY…LVYN), 71–91 (WQRW…CYLL), and 100–120 (FCTA…DRLL). Residues Asp-126 and Asp-144 contribute to the active site. The helical transmembrane segment at 136–156 (HWPAFNLADSAITIGAALLVF) threads the bilayer.

The protein belongs to the peptidase A8 family.

Its subcellular location is the cell inner membrane. The enzyme catalyses Release of signal peptides from bacterial membrane prolipoproteins. Hydrolyzes -Xaa-Yaa-Zaa-|-(S,diacylglyceryl)Cys-, in which Xaa is hydrophobic (preferably Leu), and Yaa (Ala or Ser) and Zaa (Gly or Ala) have small, neutral side chains.. It functions in the pathway protein modification; lipoprotein biosynthesis (signal peptide cleavage). Functionally, this protein specifically catalyzes the removal of signal peptides from prolipoproteins. The sequence is that of Lipoprotein signal peptidase from Paraburkholderia phymatum (strain DSM 17167 / CIP 108236 / LMG 21445 / STM815) (Burkholderia phymatum).